The chain runs to 195 residues: dTTP/UTP pyrophosphatase (195 aa).

The active-site Proton acceptor is Asp-76.

This sequence belongs to the Maf family. YhdE subfamily. It depends on a divalent metal cation as a cofactor.

It localises to the cytoplasm. The catalysed reaction is dTTP + H2O = dTMP + diphosphate + H(+). It catalyses the reaction UTP + H2O = UMP + diphosphate + H(+). Nucleoside triphosphate pyrophosphatase that hydrolyzes dTTP and UTP. May have a dual role in cell division arrest and in preventing the incorporation of modified nucleotides into cellular nucleic acids. The protein is dTTP/UTP pyrophosphatase of Shewanella frigidimarina (strain NCIMB 400).